A 724-amino-acid polypeptide reads, in one-letter code: Catalase-peroxidase (724 aa).

The tryptophyl-tyrosyl-methioninium (Trp-Tyr) (with M-252) cross-link spans 98-226 (WHAAGSYRTA…LAAVQMGLIY (129 aa)). The active-site Proton acceptor is histidine 99. Residues 226–252 (YVNPQGVNGEPDPLRTALHVRETFARM) constitute a cross-link (tryptophyl-tyrosyl-methioninium (Tyr-Met) (with W-98)). Histidine 267 is a binding site for heme b.

The protein belongs to the peroxidase family. Peroxidase/catalase subfamily. As to quaternary structure, homodimer or homotetramer. Heme b serves as cofactor. In terms of processing, formation of the three residue Trp-Tyr-Met cross-link is important for the catalase, but not the peroxidase activity of the enzyme.

It catalyses the reaction H2O2 + AH2 = A + 2 H2O. It carries out the reaction 2 H2O2 = O2 + 2 H2O. Functionally, bifunctional enzyme with both catalase and broad-spectrum peroxidase activity. This chain is Catalase-peroxidase, found in Cereibacter sphaeroides (strain ATCC 17025 / ATH 2.4.3) (Rhodobacter sphaeroides).